The sequence spans 262 residues: Small ribosomal subunit protein eS1 (262 aa).

It belongs to the eukaryotic ribosomal protein eS1 family. In terms of assembly, component of the small ribosomal subunit. Mature ribosomes consist of a small (40S) and a large (60S) subunit. The 40S subunit contains about 33 different proteins and 1 molecule of RNA (18S). The 60S subunit contains about 49 different proteins and 3 molecules of RNA (25S, 5.8S and 5S).

It is found in the cytoplasm. In Theileria parva (East coast fever infection agent), this protein is Small ribosomal subunit protein eS1.